Consider the following 336-residue polypeptide: UPF0324 membrane protein spr0034 (336 aa).

8 helical membrane-spanning segments follow: residues 65–84, 91–113, 118–140, 153–175, 211–233, 249–271, 286–305, and 312–334; these read LLQY…QVFA, PVIL…FFAL, ATLV…APVI, VIFF…LHLS, SATI…LSYW, VFPL…TSLG, FLIV…VAMV, and ILLG…TLIG.

This sequence belongs to the UPF0324 family.

It localises to the cell membrane. The protein is UPF0324 membrane protein spr0034 of Streptococcus pneumoniae (strain ATCC BAA-255 / R6).